The chain runs to 123 residues: uncharacterized protein (123 aa).

It to M.tuberculosis Rv0477.

This is an uncharacterized protein from Mycobacterium leprae (strain TN).